A 334-amino-acid polypeptide reads, in one-letter code: Holliday junction branch migration complex subunit RuvB (334 aa).

The large ATPase domain (RuvB-L) stretch occupies residues 4–184 (ADRLIAADAQ…FGIVQRLEFY (181 aa)). ATP contacts are provided by residues Ile23, Arg24, Gly65, Lys68, Thr69, Thr70, 131–133 (EDY), Arg174, Tyr184, and Arg221. Mg(2+) is bound at residue Thr69. The tract at residues 185–255 (QVADLQHIVG…VAAQALNMLD (71 aa)) is small ATPAse domain (RuvB-S). Residues 258–334 (AAGFDYMDRK…YQHFGIDRAE (77 aa)) are head domain (RuvB-H). The DNA site is built by Arg294, Arg313, and Arg318.

The protein belongs to the RuvB family. Homohexamer. Forms an RuvA(8)-RuvB(12)-Holliday junction (HJ) complex. HJ DNA is sandwiched between 2 RuvA tetramers; dsDNA enters through RuvA and exits via RuvB. An RuvB hexamer assembles on each DNA strand where it exits the tetramer. Each RuvB hexamer is contacted by two RuvA subunits (via domain III) on 2 adjacent RuvB subunits; this complex drives branch migration. In the full resolvosome a probable DNA-RuvA(4)-RuvB(12)-RuvC(2) complex forms which resolves the HJ.

It localises to the cytoplasm. The catalysed reaction is ATP + H2O = ADP + phosphate + H(+). Its function is as follows. The RuvA-RuvB-RuvC complex processes Holliday junction (HJ) DNA during genetic recombination and DNA repair, while the RuvA-RuvB complex plays an important role in the rescue of blocked DNA replication forks via replication fork reversal (RFR). RuvA specifically binds to HJ cruciform DNA, conferring on it an open structure. The RuvB hexamer acts as an ATP-dependent pump, pulling dsDNA into and through the RuvAB complex. RuvB forms 2 homohexamers on either side of HJ DNA bound by 1 or 2 RuvA tetramers; 4 subunits per hexamer contact DNA at a time. Coordinated motions by a converter formed by DNA-disengaged RuvB subunits stimulates ATP hydrolysis and nucleotide exchange. Immobilization of the converter enables RuvB to convert the ATP-contained energy into a lever motion, pulling 2 nucleotides of DNA out of the RuvA tetramer per ATP hydrolyzed, thus driving DNA branch migration. The RuvB motors rotate together with the DNA substrate, which together with the progressing nucleotide cycle form the mechanistic basis for DNA recombination by continuous HJ branch migration. Branch migration allows RuvC to scan DNA until it finds its consensus sequence, where it cleaves and resolves cruciform DNA. This chain is Holliday junction branch migration complex subunit RuvB, found in Edwardsiella ictaluri (strain 93-146).